The following is a 372-amino-acid chain: MPATCLLHTMLTLPSPSTRNLRSIQMPRARTFSSPSRYRNGFEHAGCRCQGSTLSQIYSSLGYSGLQASQVNEGYEHLIHMLGHSREAMQLEAGAGVAIREGFKVVDQFLKDVQHYYNSEAFSVDFSKPEIAAEEINQFIAKKTNDKITNMVKDLDSDTVMMLINYMYFRGKWDKPFDAQLTHKADFKVDEDTTVQVDMMKRTGRYDIYQDPVNQTTVMMVPYKGNTSMMIIFPDDGKMKELEESISRHHLKNWHDKLFRSSVDLFMPKFSITATSKLKGILEDMGVTDAFGDTADLSGLTEEVKVKVSQVVHKAVLSVDEKGTEAAAATTIEIMPMSLPDTVILNRPFLVLIVEDTTKSILFMGKITNPTE.

An N-terminal signal peptide occupies residues 1 to 19 (MPATCLLHTMLTLPSPSTR). Asn214 and Asn226 each carry an N-linked (GlcNAc...) asparagine glycan. An RCL region spans residues 328–347 (AATTIEIMPMSLPDTVILNR).

Belongs to the serpin family.

It localises to the secreted. In Cyprinus carpio (Common carp), this protein is Alpha-1-antitrypsin homolog.